We begin with the raw amino-acid sequence, 1186 residues long: Pesticidal crystal protein Cry14Aa (1186 aa).

It belongs to the delta endotoxin family.

Promotes colloidosmotic lysis by binding to the midgut epithelial cells of insects. In Bacillus thuringiensis subsp. sotto, this protein is Pesticidal crystal protein Cry14Aa (cry14Aa).